A 1137-amino-acid chain; its full sequence is Protein sel-1 homolog 3 (1137 aa).

A disordered region spans residues 1-42; that stretch reads MQWRGAGLWWPRRRQQQQQQQPPPPAFGPPAAAMVPPSRGVS. 2 N-linked (GlcNAc...) asparagine glycosylation sites follow: Asn-206 and Asn-387. Sel1-like repeat units lie at residues 575-609, 611-647, 694-730, 732-767, 768-800, 801-839, and 840-877; these read HKAS…GQGS, RLSS…TKTP, AAAQ…LETE, PALI…SKGL, HQAV…EMGN, PDAS…QGGH, and IEGT…EKNG. At Ser-613 the chain carries Phosphoserine. Residue Asn-942 is glycosylated (N-linked (GlcNAc...) asparagine). The Sel1-like 8 repeat unit spans residues 952–988; it reads SFAYLKMGDLYYYGHQNQSQDLELSVQMYAQAALDGD. Residues 1067-1087 form a helical membrane-spanning segment; that stretch reads LIYFLGTFLLSVVIAWMVLYL. The segment at 1100-1137 is disordered; it reads AWVSADPTSSTPSPAVPPAADASDHDPPMMANGPEPRG. Residues 1102 to 1120 are compositionally biased toward low complexity; sequence VSADPTSSTPSPAVPPAAD.

It localises to the membrane. The polypeptide is Protein sel-1 homolog 3 (Sel1l3) (Mus musculus (Mouse)).